Reading from the N-terminus, the 265-residue chain is Isoprenyl transferase 1 (265 aa).

Asp43 is an active-site residue. Asp43 serves as a coordination point for Mg(2+). Residues 44–47, Trp48, His61, and 89–91 each bind substrate; these read GNRR and STE. The active-site Proton acceptor is Asn92. Substrate is bound by residues Arg95, Arg214, and 220 to 222; that span reads RLS. Glu233 serves as a coordination point for Mg(2+).

The protein belongs to the UPP synthase family. In terms of assembly, homodimer. The cofactor is Mg(2+).

Functionally, catalyzes the condensation of isopentenyl diphosphate (IPP) with allylic pyrophosphates generating different type of terpenoids. The sequence is that of Isoprenyl transferase 1 from Corynebacterium diphtheriae (strain ATCC 700971 / NCTC 13129 / Biotype gravis).